We begin with the raw amino-acid sequence, 202 residues long: NADH:(hydroxy)cinnamate reductase subunit CrdA (202 aa).

The protein belongs to the NADH-dependent flavin reductase family. As to quaternary structure, NADH:(hydroxy)cinnamate reductase Crd is a heterodimer composed of CrdA and CrdB subunits, encoded by adjacent genes. FMN serves as cofactor.

Component of the NADH:(hydroxy)cinnamate reductase. CrdA is probably reduced by NADH and then transfers the electrons to the catalytic center of CrdB. Is likely involved in protecting V.ruber from (hydroxy)cinnamate poisoning. The polypeptide is NADH:(hydroxy)cinnamate reductase subunit CrdA (Vibrio ruber (strain DSM 16370 / JCM 11486 / BCRC 17186 / CECT 7878 / LMG 23124 / VR1)).